The primary structure comprises 162 residues: Phosphopantetheine adenylyltransferase (162 aa).

T14 is a binding site for substrate. ATP is bound by residues 14-15 (TF) and H22. Positions 46, 78, and 92 each coordinate substrate. Residues 93–95 (GLR), E103, and 128–134 (HSFISSS) contribute to the ATP site.

The protein belongs to the bacterial CoaD family. As to quaternary structure, homohexamer. Mg(2+) is required as a cofactor.

The protein localises to the cytoplasm. The enzyme catalyses (R)-4'-phosphopantetheine + ATP + H(+) = 3'-dephospho-CoA + diphosphate. It participates in cofactor biosynthesis; coenzyme A biosynthesis; CoA from (R)-pantothenate: step 4/5. Functionally, reversibly transfers an adenylyl group from ATP to 4'-phosphopantetheine, yielding dephospho-CoA (dPCoA) and pyrophosphate. This Xylella fastidiosa (strain 9a5c) protein is Phosphopantetheine adenylyltransferase.